A 264-amino-acid chain; its full sequence is S-adenosylmethionine decarboxylase proenzyme (264 aa).

Ser-112 acts as the Schiff-base intermediate with substrate; via pyruvic acid in catalysis. Ser-112 carries the post-translational modification Pyruvic acid (Ser); by autocatalysis. The Proton acceptor; for processing activity role is filled by His-117. The active-site Proton donor; for catalytic activity is Cys-140.

It belongs to the prokaryotic AdoMetDC family. Type 2 subfamily. In terms of assembly, heterooctamer of four alpha and four beta chains arranged as a tetramer of alpha/beta heterodimers. Pyruvate serves as cofactor. Post-translationally, is synthesized initially as an inactive proenzyme. Formation of the active enzyme involves a self-maturation process in which the active site pyruvoyl group is generated from an internal serine residue via an autocatalytic post-translational modification. Two non-identical subunits are generated from the proenzyme in this reaction, and the pyruvate is formed at the N-terminus of the alpha chain, which is derived from the carboxyl end of the proenzyme. The post-translation cleavage follows an unusual pathway, termed non-hydrolytic serinolysis, in which the side chain hydroxyl group of the serine supplies its oxygen atom to form the C-terminus of the beta chain, while the remainder of the serine residue undergoes an oxidative deamination to produce ammonia and the pyruvoyl group blocking the N-terminus of the alpha chain.

The catalysed reaction is S-adenosyl-L-methionine + H(+) = S-adenosyl 3-(methylsulfanyl)propylamine + CO2. Its pathway is amine and polyamine biosynthesis; S-adenosylmethioninamine biosynthesis; S-adenosylmethioninamine from S-adenosyl-L-methionine: step 1/1. Catalyzes the decarboxylation of S-adenosylmethionine to S-adenosylmethioninamine (dcAdoMet), the propylamine donor required for the synthesis of the polyamines spermine and spermidine from the diamine putrescine. The polypeptide is S-adenosylmethionine decarboxylase proenzyme (Salmonella gallinarum (strain 287/91 / NCTC 13346)).